The sequence spans 134 residues: Global transcriptional regulator Spx (134 aa).

A disulfide bond links Cys10 and Cys13.

Belongs to the ArsC family. Spx subfamily. As to quaternary structure, interacts with the C-terminal domain of the alpha subunit of the RNAP.

The protein resides in the cytoplasm. Functionally, global transcriptional regulator that plays a key role in stress response and exerts either positive or negative regulation of genes. Acts by interacting with the C-terminal domain of the alpha subunit of the RNA polymerase (RNAP). This interaction can enhance binding of RNAP to the promoter region of target genes and stimulate their transcription, or block interaction of RNAP with activator. The protein is Global transcriptional regulator Spx of Streptococcus pyogenes serotype M3 (strain ATCC BAA-595 / MGAS315).